We begin with the raw amino-acid sequence, 899 residues long: MDDVATMKSENANLRKIQSRLLQWEQKDNPLAPLSSAQNEFINRLADSLTGATSPGANPLMESQELSLECKTTLVDFKNSGSVIDSTQDFLSWYNSIDSEILEHYDDVYLDYYGQLKQRSVECDKLLEEIDVSLESLQKLTNEYKFVSEKTSSLHQASENLLQDQTKLNEIGEEIRRRLKYFSQAESIYQRLQNPTFSVSNDTFVEILNTIDECLEYMRVNPGFSEAFAYGVKYRNCLSKATQMMRNYVSNILTNATAQILGPQRSETGMEQGSEAAFALYYGKFQASAPRVKRITGMIEGRLDRSVEYEQLLAALHQQFLANRATIMSSGVEQAIRDLSKKHKGDHCALVRSACAFMVHVCQDEHRLFFQFFTNSSPQLTAYMEGLCTILYDTLRPFIIRIDHLETLAEICSILRVEMLDEHVTYNPESLEAFAKIVYQLLQDVQERIGFRAQNYLESDILNYRPSAGDLAYPEKLEMMESIALSLQENYLRRADSRSSIVSMTSLASQEVESINQQAEQASKSRASNSPADLHGMWYPTVRRTLVCLSRLYRCIDRAIFQSLSQQALAYCIQSVSNAAAQISQKKTSIDGELFEIKHLLILREQIAPFRVDFTVKETSLDFSKVKTAAFELLQKRKQLFALGSNNALLEFLLDGTPQVKEQLLDSRKDVDRQLKMVCEMFIKDATRQLVGPILNFIDTAQNHVKQSAASGSSQPGAKQQQQQGLALRMAAFAAPQQISSIIQESIRNIKTKLGALQRSMQLYLANKDTEFILFRPIRNNIIGSFVKLEQLLTTNSYSKDDLTVVSCPSAEQISVLLSSVNLSGTVGAEPFGGIQRKISASSMGGNGGASVKPPIEKKVSFDSGANTVVQIEAGSEAVEVSAEEASVEEALEGKIEAE.

It belongs to the COG3 family. As to quaternary structure, component of the conserved oligomeric Golgi complex which is composed of eight different subunits and is required for normal Golgi morphology and localization.

Its subcellular location is the golgi apparatus membrane. Its function is as follows. Involved in ER-Golgi transport. In Aedes aegypti (Yellowfever mosquito), this protein is Conserved oligomeric Golgi complex subunit 3.